The chain runs to 369 residues: UPF0284 protein sll1500 (369 aa).

The protein belongs to the UPF0284 family.

The protein is UPF0284 protein sll1500 of Synechocystis sp. (strain ATCC 27184 / PCC 6803 / Kazusa).